The primary structure comprises 131 residues: Large ribosomal subunit protein bL17 (131 aa).

Belongs to the bacterial ribosomal protein bL17 family. In terms of assembly, part of the 50S ribosomal subunit. Contacts protein L32.

This Teredinibacter turnerae (strain ATCC 39867 / T7901) protein is Large ribosomal subunit protein bL17.